Consider the following 530-residue polypeptide: UDP-glucuronosyltransferase 1A7 (530 aa).

The N-terminal stretch at 1-25 is a signal peptide; that stretch reads MARAGWTGLLPLYVCLLLTCGFAKA. N-linked (GlcNAc...) asparagine glycosylation is found at N71, N292, and N344. Residues 488-504 form a helical membrane-spanning segment; that stretch reads VIGFLLAVVLTVAFITF.

It belongs to the UDP-glycosyltransferase family. Homodimer. Homooligomer. Interacts with UGT1A1, UGT1A3, UGT1A4, UGT1A6, UGT1A8, UGT1A9 and UGT1A10 to form heterodimers. Isoform 1 interacts with isoform 2/i2 suggesting that oligomerization is involved in negative regulation of transferase activity by isoform 2. Isoform 1 also interacts with respective i2 isoforms of UGT1A1, UGT1A3, UGT1A4, UGT1A6, UGT1A8, UGT1A9 and UGT1A10. Liver and gastric tissue. Isoform 1 and isoform 2 are expressed in esophagus. Neither isoform is expressed in liver, kidney, colon and small intestine.

It localises to the endoplasmic reticulum membrane. The enzyme catalyses glucuronate acceptor + UDP-alpha-D-glucuronate = acceptor beta-D-glucuronoside + UDP + H(+). It carries out the reaction 17alpha-estradiol + UDP-alpha-D-glucuronate = 17alpha-estradiol 3-O-(beta-D-glucuronate) + UDP + H(+). The catalysed reaction is prunetin + UDP-alpha-D-glucuronate = prunetin-5-O-beta-D-glucuronide + UDP. It catalyses the reaction 5-epi-5-F2t-IsoP + UDP-alpha-D-glucuronate = 5-epi-5-F2t-IsoP-glucuronide + UDP + H(+). The enzyme catalyses (E)-ferulate + UDP-alpha-D-glucuronate = (E)-ferulic acid beta-D-glucuronate ester + UDP. It carries out the reaction candesartan + UDP-alpha-D-glucuronate = candesartan O-beta-D-glucuronoside + UDP. The catalysed reaction is SN-38 + UDP-alpha-D-glucuronate = SN-38 O-beta-D-glucuronide + UDP + H(+). It catalyses the reaction mycophenolate + UDP-alpha-D-glucuronate = mycophenolate 7-O-beta-D-glucuronide + UDP + H(+). Functionally, UDP-glucuronosyltransferase (UGT) that catalyzes phase II biotransformation reactions in which lipophilic substrates are conjugated with glucuronic acid to increase the metabolite's water solubility, thereby facilitating excretion into either the urine or bile. Essential for the elimination and detoxification of drugs, xenobiotics and endogenous compounds. Catalyzes the glucuronidation of endogenous estrogen hormone epiestradiol. Involved in the glucuronidation of F2-isoprostane (5-epi-5-F2t-IsoP). Involved in the glucuronidation of the phytochemical ferulic acid at the carboxylic acid group. Also catalyzes the glucuronidation of the isoflavones genistein, daidzein, glycitein, formononetin, biochanin A and prunetin, which are phytoestrogens with anticancer and cardiovascular properties. Involved in the glucuronidation of the AGTR1 angiotensin receptor antagonist caderastan, a drug which can inhibit the effect of angiotensin II. Involved in the biotransformation of 7-ethyl-10-hydroxycamptothecin (SN-38), the pharmacologically active metabolite of the anticancer drug irinotecan. Also metabolizes mycophenolate, an immunosuppressive agent. In terms of biological role, lacks UGT glucuronidation activity but acts as a negative regulator of isoform 1. This chain is UDP-glucuronosyltransferase 1A7, found in Homo sapiens (Human).